A 107-amino-acid chain; its full sequence is UPF0145 protein YbjQ (107 aa).

It belongs to the UPF0145 family.

The sequence is that of UPF0145 protein YbjQ from Escherichia coli (strain SMS-3-5 / SECEC).